We begin with the raw amino-acid sequence, 560 residues long: Dihydroxy-acid dehydratase (560 aa).

Asp78 lines the Mg(2+) pocket. Cys119 serves as a coordination point for [2Fe-2S] cluster. Residues Asp120 and Lys121 each coordinate Mg(2+). Lys121 carries the N6-carboxylysine modification. Cys192 lines the [2Fe-2S] cluster pocket. Glu446 is a Mg(2+) binding site. Ser472 (proton acceptor) is an active-site residue.

It belongs to the IlvD/Edd family. Homodimer. It depends on [2Fe-2S] cluster as a cofactor. Mg(2+) serves as cofactor.

It carries out the reaction (2R)-2,3-dihydroxy-3-methylbutanoate = 3-methyl-2-oxobutanoate + H2O. The catalysed reaction is (2R,3R)-2,3-dihydroxy-3-methylpentanoate = (S)-3-methyl-2-oxopentanoate + H2O. It participates in amino-acid biosynthesis; L-isoleucine biosynthesis; L-isoleucine from 2-oxobutanoate: step 3/4. Its pathway is amino-acid biosynthesis; L-valine biosynthesis; L-valine from pyruvate: step 3/4. Functionally, functions in the biosynthesis of branched-chain amino acids. Catalyzes the dehydration of (2R,3R)-2,3-dihydroxy-3-methylpentanoate (2,3-dihydroxy-3-methylvalerate) into 2-oxo-3-methylpentanoate (2-oxo-3-methylvalerate) and of (2R)-2,3-dihydroxy-3-methylbutanoate (2,3-dihydroxyisovalerate) into 2-oxo-3-methylbutanoate (2-oxoisovalerate), the penultimate precursor to L-isoleucine and L-valine, respectively. The sequence is that of Dihydroxy-acid dehydratase from Anaeromyxobacter sp. (strain K).